The chain runs to 225 residues: Agamous-like MADS-box protein MADS1 (225 aa).

Expressed in flowers and seeds.

It is found in the nucleus. Its function is as follows. Probable transcription factor involved in flower development. The polypeptide is Agamous-like MADS-box protein MADS1 (Vitis vinifera (Grape)).